The sequence spans 429 residues: MPAIVIVGAQWGDEGKGKATDLLGGRVDYVVKPNGGNNAGHTVVVGGEKFELKLLPAGILSPNATSVIGNGVVINPQALFEEIDGLEARGADTSHLRISANAHLVAPYHQTLDQVSERFLGKRAIGTTGRGIGPTYMDKVGRLGIRVQDVLDESILRQKIEGALRQKNELLVKLYNRRAFEVDEIVEYFMGFADRLAPMIVDSTRLLNEALDRDEVVLMEGGQATYLDVDHGTYPFVTSSNPTAGGASVGSGVGPTRITRVIGIQKAYTTRVGAGPFPTELFDEMGERLRTTGGEFGVNTGRPRRTGWYDAVMARQAARINGFTDLFITKLDVLTGLSEIPVCVAYEVDGQRFDEMPMTQSDFHHAVPVYENFPGWTEDITGARSLEDLPKNAQDYVHALEAMSGCRISAVGVGPDRDDTIVVRDLIAD.

GTP is bound by residues 12 to 18 (GDEGKGK) and 40 to 42 (GHT). The Proton acceptor role is filled by Asp13. 2 residues coordinate Mg(2+): Asp13 and Gly40. IMP contacts are provided by residues 13–16 (DEGK), 38–41 (NAGH), Thr128, Arg142, Gln223, Thr238, and Arg302. His41 functions as the Proton donor in the catalytic mechanism. A substrate-binding site is contributed by 298–304 (VNTGRPR). GTP contacts are provided by residues Arg304, 330 to 332 (KLD), and 412 to 414 (GVG).

Belongs to the adenylosuccinate synthetase family. In terms of assembly, homodimer. Mg(2+) serves as cofactor.

The protein localises to the cytoplasm. The catalysed reaction is IMP + L-aspartate + GTP = N(6)-(1,2-dicarboxyethyl)-AMP + GDP + phosphate + 2 H(+). It functions in the pathway purine metabolism; AMP biosynthesis via de novo pathway; AMP from IMP: step 1/2. In terms of biological role, plays an important role in the de novo pathway of purine nucleotide biosynthesis. Catalyzes the first committed step in the biosynthesis of AMP from IMP. In Kocuria rhizophila (strain ATCC 9341 / DSM 348 / NBRC 103217 / DC2201), this protein is Adenylosuccinate synthetase.